The following is a 646-amino-acid chain: 1-deoxy-D-xylulose-5-phosphate synthase (646 aa).

Thiamine diphosphate is bound by residues His86 and 127–129 (AHS). Asp158 serves as a coordination point for Mg(2+). Thiamine diphosphate contacts are provided by residues 159 to 160 (GA), Asn188, Tyr295, and Glu377. Asn188 is a binding site for Mg(2+).

Belongs to the transketolase family. DXPS subfamily. Homodimer. Requires Mg(2+) as cofactor. Thiamine diphosphate serves as cofactor.

It catalyses the reaction D-glyceraldehyde 3-phosphate + pyruvate + H(+) = 1-deoxy-D-xylulose 5-phosphate + CO2. It participates in metabolic intermediate biosynthesis; 1-deoxy-D-xylulose 5-phosphate biosynthesis; 1-deoxy-D-xylulose 5-phosphate from D-glyceraldehyde 3-phosphate and pyruvate: step 1/1. In terms of biological role, catalyzes the acyloin condensation reaction between C atoms 2 and 3 of pyruvate and glyceraldehyde 3-phosphate to yield 1-deoxy-D-xylulose-5-phosphate (DXP). The sequence is that of 1-deoxy-D-xylulose-5-phosphate synthase from Burkholderia ambifaria (strain ATCC BAA-244 / DSM 16087 / CCUG 44356 / LMG 19182 / AMMD) (Burkholderia cepacia (strain AMMD)).